Reading from the N-terminus, the 99-residue chain is NADH-quinone oxidoreductase subunit K (99 aa).

A run of 3 helical transmembrane segments spans residues 3–23 (PDNYLHLSALLFTIGAAGVLL), 28–48 (IVVFMCVELMLNAANLAFVAF), and 59–79 (VVAFFTMVVAACEVVIGLAII).

The protein belongs to the complex I subunit 4L family. In terms of assembly, NDH-1 is composed of 14 different subunits. Subunits NuoA, H, J, K, L, M, N constitute the membrane sector of the complex.

The protein localises to the cell membrane. The catalysed reaction is a quinone + NADH + 5 H(+)(in) = a quinol + NAD(+) + 4 H(+)(out). In terms of biological role, NDH-1 shuttles electrons from NADH, via FMN and iron-sulfur (Fe-S) centers, to quinones in the respiratory chain. The immediate electron acceptor for the enzyme in this species is believed to be a menaquinone. Couples the redox reaction to proton translocation (for every two electrons transferred, four hydrogen ions are translocated across the cytoplasmic membrane), and thus conserves the redox energy in a proton gradient. This Mycobacterium sp. (strain KMS) protein is NADH-quinone oxidoreductase subunit K.